A 54-amino-acid polypeptide reads, in one-letter code: UPF0391 membrane protein Pnap_0920 (54 aa).

2 consecutive transmembrane segments (helical) span residues 6–26 (VVFL…IAAG) and 30–50 (IAKI…VVSL).

It belongs to the UPF0391 family.

The protein resides in the cell membrane. The protein is UPF0391 membrane protein Pnap_0920 of Polaromonas naphthalenivorans (strain CJ2).